The sequence spans 125 residues: MPTINQLVRKPRVAEKAKSKVPALEKCPQKRGVCTRVYTTTPKKPNSALRKVCKVRLTNGFEVISYIGGEGHNLQEHSVVLIRGGRVKDLPGVRYHTVRGSLDTQGVKDRKQSRSKYGAKRPKAA.

Asp-89 carries the 3-methylthioaspartic acid modification. Residues 100–125 form a disordered region; that stretch reads GSLDTQGVKDRKQSRSKYGAKRPKAA. Over residues 113–125 the composition is skewed to basic residues; that stretch reads SRSKYGAKRPKAA.

Belongs to the universal ribosomal protein uS12 family. Part of the 30S ribosomal subunit. Contacts proteins S8 and S17. May interact with IF1 in the 30S initiation complex.

In terms of biological role, with S4 and S5 plays an important role in translational accuracy. Functionally, interacts with and stabilizes bases of the 16S rRNA that are involved in tRNA selection in the A site and with the mRNA backbone. Located at the interface of the 30S and 50S subunits, it traverses the body of the 30S subunit contacting proteins on the other side and probably holding the rRNA structure together. The combined cluster of proteins S8, S12 and S17 appears to hold together the shoulder and platform of the 30S subunit. The protein is Small ribosomal subunit protein uS12 of Dechloromonas aromatica (strain RCB).